A 727-amino-acid polypeptide reads, in one-letter code: Glycerol-3-phosphate dehydrogenase, mitochondrial (727 aa).

The N-terminal 42 residues, 1 to 42 (MAFQKVVKGTILMGGGALATVLGLSQFAHYRRKQVSLAYVEA), are a transit peptide targeting the mitochondrion. Residue 71–99 (DILVIGGGATGCGCALDAVTRGLKTALVE) coordinates FAD. Tyr-601 carries the phosphotyrosine modification. 2 EF-hand domains span residues 623 to 658 (PDID…INVQ) and 659 to 694 (MDED…VHTG). Ca(2+)-binding residues include Asp-672, Asn-674, Asn-676, Gln-678, and Glu-683.

This sequence belongs to the FAD-dependent glycerol-3-phosphate dehydrogenase family. Requires FAD as cofactor.

It localises to the mitochondrion. The enzyme catalyses a quinone + sn-glycerol 3-phosphate = dihydroxyacetone phosphate + a quinol. It functions in the pathway polyol metabolism; glycerol degradation via glycerol kinase pathway; glycerone phosphate from sn-glycerol 3-phosphate (anaerobic route): step 1/1. With respect to regulation, calcium-binding enhance the activity of the enzyme. Functionally, calcium-responsive mitochondrial glycerol-3-phosphate dehydrogenase which seems to be a key component of the pancreatic beta-cell glucose-sensing device. This is Glycerol-3-phosphate dehydrogenase, mitochondrial from Rattus norvegicus (Rat).